We begin with the raw amino-acid sequence, 296 residues long: ADP-dependent (S)-NAD(P)H-hydrate dehydratase (296 aa).

The region spanning 18 to 292 (TALRFPHVFK…PAARWLRNRI (275 aa)) is the YjeF C-terminal domain. (6S)-NADPHX contacts are provided by Ala53, Gly113, and His165. AMP contacts are provided by residues 202–206 (KGHKT) and Gly231. (6S)-NADPHX is bound at residue Asp232.

The protein belongs to the NnrD/CARKD family. Homotetramer. It depends on Mg(2+) as a cofactor.

It catalyses the reaction (6S)-NADHX + ADP = AMP + phosphate + NADH + H(+). The enzyme catalyses (6S)-NADPHX + ADP = AMP + phosphate + NADPH + H(+). Catalyzes the dehydration of the S-form of NAD(P)HX at the expense of ADP, which is converted to AMP. Together with NAD(P)HX epimerase, which catalyzes the epimerization of the S- and R-forms, the enzyme allows the repair of both epimers of NAD(P)HX, a damaged form of NAD(P)H that is a result of enzymatic or heat-dependent hydration. The sequence is that of ADP-dependent (S)-NAD(P)H-hydrate dehydratase from Neisseria meningitidis serogroup B (strain ATCC BAA-335 / MC58).